Reading from the N-terminus, the 408-residue chain is MSLSVTRENFDEWMVPVYVPAPLIPVRGEGSRLWDQQGKEYIDFAGGIAVNALGHAHPALREALNEQANRFWHTGNGYTNEPALRLAKKLIDATFAERVFFCNSGAEANEAALKLARKYAHDRVGNHKSGIVAFKNAFHGRTLFTVSAGGQPTYSQDFAPLPPDIRHAAYNDLNSASALIDDNTCAVIVEPVQGEGGVIPATKAFLQGLRELCDRHQALLIFDEVQTGVGRTGKLYAYMHYGVTPDILTTAKALGGGFPIGAMLTTQDYASVMTPGTHGTTYGGNPLATAVAGKVLDIINTPEMQNGVRQRHDAFIERLNTLNVRFGMFSEIRGLGLLLGCVLQTEFAGKAKLIAQEAAKAGVMVLIAGGDVVRFAPALNVSDEEIATGLDRFALACERLQTGGASCG.

K252 is modified (N6-(pyridoxal phosphate)lysine).

It belongs to the class-III pyridoxal-phosphate-dependent aminotransferase family. AstC subfamily. Pyridoxal 5'-phosphate serves as cofactor.

It catalyses the reaction N(2)-succinyl-L-ornithine + 2-oxoglutarate = N-succinyl-L-glutamate 5-semialdehyde + L-glutamate. The protein operates within amino-acid degradation; L-arginine degradation via AST pathway; L-glutamate and succinate from L-arginine: step 3/5. Catalyzes the transamination of N(2)-succinylornithine and alpha-ketoglutarate into N(2)-succinylglutamate semialdehyde and glutamate. Can also act as an acetylornithine aminotransferase. This chain is Succinylornithine transaminase, found in Salmonella paratyphi A (strain ATCC 9150 / SARB42).